Here is a 354-residue protein sequence, read N- to C-terminus: MARRIVILAGGTGGHVFPALAVAGKLRRAGAEVFWMGTRTGLEARVVPAAGYPIDWLSVSGIRGKGLASKAKAPAMLGLACLQALRILRRRKPDAVLGMGGFVAGPGGLMARVLGIPLIIHEQNRIPGTTNRWLSRIANRVLEAFPGAFQASAGAVCTGNPLRQGIETFRDHHTPRVGRHVLVLGGSLGAQALNRIVPRALARLGGEPVAIRHQTGQAMFQETQDLYQQLALTAKVDPFIEDMEEAYGWADLAICRAGAMTVSELAAAGLPAILVPFPYAIDDHQTANADYLAEAGAAVLMPQSSLDEVSLAVEIRALLDQRDRLEAMSAAARNLARYDAAESVAKVCLEEAGA.

Residues 12–14 (TGG), Asn-124, Arg-163, Ser-187, Ile-240, and Gln-285 each bind UDP-N-acetyl-alpha-D-glucosamine.

Belongs to the glycosyltransferase 28 family. MurG subfamily.

The protein resides in the cell inner membrane. The catalysed reaction is di-trans,octa-cis-undecaprenyl diphospho-N-acetyl-alpha-D-muramoyl-L-alanyl-D-glutamyl-meso-2,6-diaminopimeloyl-D-alanyl-D-alanine + UDP-N-acetyl-alpha-D-glucosamine = di-trans,octa-cis-undecaprenyl diphospho-[N-acetyl-alpha-D-glucosaminyl-(1-&gt;4)]-N-acetyl-alpha-D-muramoyl-L-alanyl-D-glutamyl-meso-2,6-diaminopimeloyl-D-alanyl-D-alanine + UDP + H(+). It functions in the pathway cell wall biogenesis; peptidoglycan biosynthesis. Cell wall formation. Catalyzes the transfer of a GlcNAc subunit on undecaprenyl-pyrophosphoryl-MurNAc-pentapeptide (lipid intermediate I) to form undecaprenyl-pyrophosphoryl-MurNAc-(pentapeptide)GlcNAc (lipid intermediate II). This Methylococcus capsulatus (strain ATCC 33009 / NCIMB 11132 / Bath) protein is UDP-N-acetylglucosamine--N-acetylmuramyl-(pentapeptide) pyrophosphoryl-undecaprenol N-acetylglucosamine transferase.